Reading from the N-terminus, the 125-residue chain is Small ribosomal subunit protein uS12 (125 aa).

3-methylthioaspartic acid is present on D89.

It belongs to the universal ribosomal protein uS12 family. Part of the 30S ribosomal subunit. Contacts proteins S8 and S17. May interact with IF1 in the 30S initiation complex.

Functionally, with S4 and S5 plays an important role in translational accuracy. In terms of biological role, interacts with and stabilizes bases of the 16S rRNA that are involved in tRNA selection in the A site and with the mRNA backbone. Located at the interface of the 30S and 50S subunits, it traverses the body of the 30S subunit contacting proteins on the other side and probably holding the rRNA structure together. The combined cluster of proteins S8, S12 and S17 appears to hold together the shoulder and platform of the 30S subunit. The sequence is that of Small ribosomal subunit protein uS12 from Clostridium acetobutylicum (strain ATCC 824 / DSM 792 / JCM 1419 / IAM 19013 / LMG 5710 / NBRC 13948 / NRRL B-527 / VKM B-1787 / 2291 / W).